We begin with the raw amino-acid sequence, 459 residues long: U-box domain-containing protein 75 (459 aa).

In terms of domain architecture, U-box spans 64-138; sequence AVPAVFICPI…AAWFSRRYTR (75 aa). ARM repeat units follow at residues 188–229 and 231–270; these read QSVT…GVPL and ADAKAALMQPAKVSLLVDMLNEGAVDTKINCVRLIRILME.

As to quaternary structure, interacts with GPA1. In terms of tissue distribution, expressed highly in panicles at flowering time, at moderate levels in vegetative shoot apices, leaf sheaths, leaf blades, and elongating internodes, and at low levels in roots.

It localises to the cell membrane. It catalyses the reaction S-ubiquitinyl-[E2 ubiquitin-conjugating enzyme]-L-cysteine + [acceptor protein]-L-lysine = [E2 ubiquitin-conjugating enzyme]-L-cysteine + N(6)-ubiquitinyl-[acceptor protein]-L-lysine.. Its pathway is protein modification; protein ubiquitination. Its function is as follows. E3 ubiquitin ligase that may function as positive regulator of brassinosteroid (BR) signaling. Possesses E3 ubiquitin ligase in vitro. Acts together with the heterotrimeric G alpha subunit GPA1 at the plasma membrane to mediate a BR signaling pathway that affects plant growth and development. Does not seem to be involved in gibberellin or cytokinin responses. This chain is U-box domain-containing protein 75, found in Oryza sativa subsp. japonica (Rice).